The sequence spans 327 residues: Undecaprenyl-phosphate 4-deoxy-4-formamido-L-arabinose transferase (327 aa).

A run of 2 helical transmembrane segments spans residues 233-253 and 268-288; these read ILSL…LLLI and VFTL…GMGL.

The protein belongs to the glycosyltransferase 2 family.

The protein resides in the cell inner membrane. The catalysed reaction is UDP-4-deoxy-4-formamido-beta-L-arabinose + di-trans,octa-cis-undecaprenyl phosphate = 4-deoxy-4-formamido-alpha-L-arabinopyranosyl di-trans,octa-cis-undecaprenyl phosphate + UDP. It functions in the pathway glycolipid biosynthesis; 4-amino-4-deoxy-alpha-L-arabinose undecaprenyl phosphate biosynthesis; 4-amino-4-deoxy-alpha-L-arabinose undecaprenyl phosphate from UDP-4-deoxy-4-formamido-beta-L-arabinose and undecaprenyl phosphate: step 1/2. Its pathway is bacterial outer membrane biogenesis; lipopolysaccharide biosynthesis. Catalyzes the transfer of 4-deoxy-4-formamido-L-arabinose from UDP to undecaprenyl phosphate. The modified arabinose is attached to lipid A and is required for resistance to polymyxin and cationic antimicrobial peptides. The chain is Undecaprenyl-phosphate 4-deoxy-4-formamido-L-arabinose transferase from Pectobacterium atrosepticum (strain SCRI 1043 / ATCC BAA-672) (Erwinia carotovora subsp. atroseptica).